The primary structure comprises 709 residues: MADEPLLLNFVVDNAQSRKPEALKSSRRWTDRARDRKRQKRNSNESSKSTVKRNSGTNGASTDYKNSQKEKVINPVFDPRKPAHELKGNKRDNTFVTSLFTGDDSEHFSQDVGQNLEDNQISNIGTTKEASNAPIKTTNFAGVQLDTQLADHLNNKMNISAPTAIQSCCLPALLNTDDKDAFIEAQTGSGKTLAYLLPIVQRLIRLPKNLHTRTSGIYAVIMAPTRELCQQIYNVANKLNNNPLSHWIVSCNVIGGEKKKSEKARIRKGVNILIGTPGRLADHLENTEALDVSQVRWVVLDEGDRLMDMGFEETLTKILSYLESQSSIIKKDLSIPSRKVTMLCSATMKDTVKRLSDSALKDALYLKSSIVEETNDGYSQAPEQLLQRYVVVPPKLRLVSLVALLRSHVRSYKKIIIFLSCSDSVDFHFEAFRCAINADEMEEAVKEKPDSEGDIISNAPALRIDGKSNVYRLHGSLSQQIRTSTLNLFSSSEDSGSHILLCTDVAARGLDLPNVDLVVQYDAPFSTDDYLHRIGRTARAGHNGAAIMFLLPKESEYINLLKSSVSANILEQPNGPSGLLSAGFSQGKTNTNDWQDRATEWQLELERFILENEPMRNIAKRAFTSYVRAYATHLSSERSIFNMRDLHLGHIAKSFALREAPGKISGANSSKPRKQGGSVDKGKSKSSKDIAALMHRKAMEHYSTEHNIG.

Positions 13 to 90 (DNAQSRKPEA…KPAHELKGNK (78 aa)) are disordered. Residues 16–34 (QSRKPEALKSSRRWTDRAR) show a composition bias toward basic and acidic residues. The segment covering 44 to 65 (NESSKSTVKRNSGTNGASTDYK) has biased composition (polar residues). A compositionally biased stretch (basic and acidic residues) spans 66–90 (NSQKEKVINPVFDPRKPAHELKGNK). The short motif at 138–167 (TNFAGVQLDTQLADHLNNKMNISAPTAIQS) is the Q motif element. The region spanning 172–366 (ALLNTDDKDA…DSALKDALYL (195 aa)) is the Helicase ATP-binding domain. 185–192 (AQTGSGKT) contributes to the ATP binding site. The DEAD box motif lies at 301-304 (DEGD). The Helicase C-terminal domain occupies 404–580 (LLRSHVRSYK…EQPNGPSGLL (177 aa)). The tract at residues 662-690 (GKISGANSSKPRKQGGSVDKGKSKSSKDI) is disordered.

Belongs to the DEAD box helicase family. DDX31/DBP7 subfamily.

The protein localises to the nucleus. It localises to the nucleolus. It carries out the reaction ATP + H2O = ADP + phosphate + H(+). Functionally, ATP-binding RNA helicase involved in the biogenesis of 60S ribosomal subunits and is required for the normal formation of 25S and 5.8S rRNAs. The protein is ATP-dependent RNA helicase dbp7 (dbp7) of Schizosaccharomyces pombe (strain 972 / ATCC 24843) (Fission yeast).